Here is a 197-residue protein sequence, read N- to C-terminus: Peptide deformylase (197 aa).

The Fe cation site is built by Cys106 and His148. Glu149 is a catalytic residue. Residue His152 coordinates Fe cation.

It belongs to the polypeptide deformylase family. Fe(2+) serves as cofactor.

The catalysed reaction is N-terminal N-formyl-L-methionyl-[peptide] + H2O = N-terminal L-methionyl-[peptide] + formate. Its function is as follows. Removes the formyl group from the N-terminal Met of newly synthesized proteins. Requires at least a dipeptide for an efficient rate of reaction. N-terminal L-methionine is a prerequisite for activity but the enzyme has broad specificity at other positions. The protein is Peptide deformylase of Mycolicibacterium gilvum (strain PYR-GCK) (Mycobacterium gilvum (strain PYR-GCK)).